A 231-amino-acid polypeptide reads, in one-letter code: NADH-ubiquinone oxidoreductase chain 4 (231 aa).

Helical transmembrane passes span 1–21, 34–54, 61–80, 84–106, 118–138, and 169–189; these read PIAG…YGII, VFLP…LTCL, SLIA…AIMI, WGLS…LFCL, ILIL…WWLL, and TIIL…HMFL.

This sequence belongs to the complex I subunit 4 family.

Its subcellular location is the mitochondrion membrane. The catalysed reaction is a ubiquinone + NADH + 5 H(+)(in) = a ubiquinol + NAD(+) + 4 H(+)(out). In terms of biological role, core subunit of the mitochondrial membrane respiratory chain NADH dehydrogenase (Complex I) that is believed to belong to the minimal assembly required for catalysis. Complex I functions in the transfer of electrons from NADH to the respiratory chain. The immediate electron acceptor for the enzyme is believed to be ubiquinone. In Porthidium nasutum (Hognosed pitviper), this protein is NADH-ubiquinone oxidoreductase chain 4 (MT-ND4).